A 222-amino-acid polypeptide reads, in one-letter code: Interleukin-12 subunit alpha (222 aa).

The N-terminal stretch at 1–25 (MCPPRGLLLVTILVLLSHLDHLTWA) is a signal peptide. Disulfide bonds link Cys40–Cys113, Cys67–Cys199, and Cys88–Cys126. Asn42, Asn96, and Asn110 each carry an N-linked (GlcNAc...) asparagine glycan.

The protein belongs to the IL-6 superfamily. Heterodimer with IL12B; disulfide-linked. This heterodimer is known as interleukin IL-12. Heterodimer with EBI3/IL27B; not disulfide-linked. This heterodimer is known as interleukin IL-35. Interacts with NBR1; this interaction promotes IL-12 secretion.

It localises to the secreted. Its function is as follows. Heterodimerizes with IL12B to form the IL-12 cytokine or with EBI3/IL27B to form the IL-35 cytokine. IL-12 is primarily produced by professional antigen-presenting cells (APCs) such as B-cells and dendritic cells (DCs) as well as macrophages and granulocytes and regulates T-cell and natural killer-cell responses, induces the production of interferon-gamma (IFN-gamma), favors the differentiation of T-helper 1 (Th1) cells and is an important link between innate resistance and adaptive immunity. Mechanistically, exerts its biological effects through a receptor composed of IL12R1 and IL12R2 subunits. Binding to the receptor results in the rapid tyrosine phosphorylation of a number of cellular substrates including the JAK family kinases TYK2 and JAK2. In turn, recruited STAT4 gets phosphorylated and translocates to the nucleus where it regulates cytokine/growth factor responsive genes. As part of IL-35, plays essential roles in maintaining the immune homeostasis of the liver microenvironment and also functions as an immune-suppressive cytokine. Mediates biological events through unconventional receptors composed of IL12RB2 and gp130/IL6ST heterodimers or homodimers. Signaling requires the transcription factors STAT1 and STAT4, which form a unique heterodimer that binds to distinct DNA sites. This Canis lupus familiaris (Dog) protein is Interleukin-12 subunit alpha (IL12A).